The following is a 135-amino-acid chain: Interleukin-4 (135 aa).

The first 24 residues, 1–24 (MGLTSQLIPALVCLLVCTSHFVHG), serve as a signal peptide directing secretion. 2 cysteine pairs are disulfide-bonded: C48/C85 and C70/C105. N-linked (GlcNAc...) asparagine glycosylation is found at N62 and N96.

The protein belongs to the IL-4/IL-13 family.

The protein localises to the secreted. Its function is as follows. Participates in at least several B-cell activation processes as well as of other cell types. It is a costimulator of DNA-synthesis. It induces the expression of class II MHC molecules on resting B-cells. It enhances both secretion and cell surface expression of IgE and IgG1. It also regulates the expression of the low affinity Fc receptor for IgE (CD23) on both lymphocytes and monocytes. Positively regulates IL31RA expression in macrophages. Stimulates autophagy in dendritic cells by interfering with mTORC1 signaling and through the induction of RUFY4. The protein is Interleukin-4 (IL4) of Ovis aries (Sheep).